Here is a 444-residue protein sequence, read N- to C-terminus: Chromosome partition protein MukF (444 aa).

The segment at 211–239 is leucine-zipper; the sequence is LDETSGNLRELQDTLNAAGDKLQAQLLRI.

The protein belongs to the MukF family. Interacts, and probably forms a ternary complex, with MukE and MukB via its C-terminal region. The complex formation is stimulated by calcium or magnesium. It is required for an interaction between MukE and MukB.

It is found in the cytoplasm. Its subcellular location is the nucleoid. Functionally, involved in chromosome condensation, segregation and cell cycle progression. May participate in facilitating chromosome segregation by condensation DNA from both sides of a centrally located replisome during cell division. Not required for mini-F plasmid partitioning. Probably acts via its interaction with MukB and MukE. Overexpression results in anucleate cells. It has a calcium binding activity. The sequence is that of Chromosome partition protein MukF from Actinobacillus succinogenes (strain ATCC 55618 / DSM 22257 / CCUG 43843 / 130Z).